We begin with the raw amino-acid sequence, 344 residues long: Phosphate acyltransferase (344 aa).

The protein belongs to the PlsX family. Homodimer. Probably interacts with PlsY.

Its subcellular location is the cytoplasm. It catalyses the reaction a fatty acyl-[ACP] + phosphate = an acyl phosphate + holo-[ACP]. It functions in the pathway lipid metabolism; phospholipid metabolism. Its function is as follows. Catalyzes the reversible formation of acyl-phosphate (acyl-PO(4)) from acyl-[acyl-carrier-protein] (acyl-ACP). This enzyme utilizes acyl-ACP as fatty acyl donor, but not acyl-CoA. This chain is Phosphate acyltransferase, found in Yersinia enterocolitica serotype O:8 / biotype 1B (strain NCTC 13174 / 8081).